The sequence spans 292 residues: RNA 5'-monophosphate methyltransferase (292 aa).

Residues 1–22 (MAASTEQATGGVEKTAAEEKPR) are disordered. S-adenosyl-L-methionine-binding positions include R46, N76, D110, 135–136 (DF), and M164. Positions 53-274 (ELLRRLFPQS…KQATETHPIP (222 aa)) constitute a Bin3-type SAM domain.

The protein belongs to the methyltransferase superfamily. Interacts with DICER1; the interaction may be mediated by RNA.

It localises to the cytoplasm. It catalyses the reaction a 5'-end 5'-phospho-ribonucleoside-RNA + S-adenosyl-L-methionine = a 5'-end (5'-methylphospho)-ribonucleoside-RNA + S-adenosyl-L-homocysteine. It carries out the reaction a 5'-end 5'-phospho-ribonucleoside-RNA + 2 S-adenosyl-L-methionine = a 5'-end (5'-bismethylphospho)-ribonucleoside-RNA + 2 S-adenosyl-L-homocysteine. Functionally, O-methyltransferase that specifically monomethylates 5'-monophosphate of cytoplasmic histidyl tRNA (tRNA(His)), acting as a capping enzyme by protecting tRNA(His) from cleavage by DICER1. Also able, with less efficiently, to methylate the 5' monophosphate of a subset of pre-miRNAs, acting as a negative regulator of miRNA processing. The 5' monophosphate of pre-miRNAs is recognized by DICER1 and is required for pre-miRNAs processing: methylation at this position reduces the processing of pre-miRNAs by DICER1. Was also reported to mediate dimethylation of pre-miR-145; however dimethylation cannot be reproduced by another group which observes a monomethylation of pre-miR-145. This is RNA 5'-monophosphate methyltransferase (BCDIN3D) from Bos taurus (Bovine).